The chain runs to 196 residues: Dehydrogenase RED3 (196 aa).

The NADP(+) site is built by serine 47, aspartate 74, asparagine 101, arginine 134, tyrosine 166, and lysine 170. Tyrosine 166 serves as the catalytic Proton acceptor. The Lowers pKa of active site Tyr role is filled by lysine 170.

Belongs to the short-chain dehydrogenases/reductases (SDR) family.

The catalysed reaction is a primary alcohol + NAD(+) = an aldehyde + NADH + H(+). It carries out the reaction a secondary alcohol + NAD(+) = a ketone + NADH + H(+). It functions in the pathway mycotoxin biosynthesis. Dehydrogenase; part of the Tox1B locus, one of the 2 loci that mediate the biosynthesis of T-toxin, a family of linear polyketides 37 to 45 carbons in length, of which the major component is 41 carbons, and which leads to high virulence to maize. One of the PKSs (PKS1 or PKS2) could synthesize a precursor, used subsequently by the other PKS as starter unit, to add additional carbons. Variability in the length of the final carbon backbone C35-47 could be achieved by varying the number of condensation cycles, or use of different starter or extender units or might be due to decarboxylation of the penultimate product, catalyzed by DEC1. Additional proteins are required for the biosynthesis of T-toxin, including oxidoreductases RED1, RED2, RED3, LAM1 and OXI1, as well as esterase TOX9. This chain is Dehydrogenase RED3, found in Cochliobolus heterostrophus (strain C4 / ATCC 48331 / race T) (Southern corn leaf blight fungus).